A 245-amino-acid chain; its full sequence is Type III pantothenate kinase (245 aa).

Position 6-13 (6-13 (DVGNTAMK)) interacts with ATP. Substrate-binding positions include Tyr-93 and 100–103 (GVDR). Asp-102 functions as the Proton acceptor in the catalytic mechanism. K(+) is bound at residue Asp-121. Ser-124 contributes to the ATP binding site. Thr-175 contributes to the substrate binding site.

Belongs to the type III pantothenate kinase family. In terms of assembly, homodimer. NH4(+) is required as a cofactor. Requires K(+) as cofactor.

Its subcellular location is the cytoplasm. The enzyme catalyses (R)-pantothenate + ATP = (R)-4'-phosphopantothenate + ADP + H(+). Its pathway is cofactor biosynthesis; coenzyme A biosynthesis; CoA from (R)-pantothenate: step 1/5. Catalyzes the phosphorylation of pantothenate (Pan), the first step in CoA biosynthesis. This Alcanivorax borkumensis (strain ATCC 700651 / DSM 11573 / NCIMB 13689 / SK2) protein is Type III pantothenate kinase.